Reading from the N-terminus, the 178-residue chain is CDP-archaeol synthase (178 aa).

Helical transmembrane passes span 3 to 23, 56 to 76, 87 to 107, 123 to 145, and 150 to 169; these read LLLL…ANAV, FFGI…VILY, LFGY…GDML, APIL…FYPL, and IVLL…IIAY.

It belongs to the CDP-archaeol synthase family. Requires Mg(2+) as cofactor.

Its subcellular location is the cell membrane. It carries out the reaction 2,3-bis-O-(geranylgeranyl)-sn-glycerol 1-phosphate + CTP + H(+) = CDP-2,3-bis-O-(geranylgeranyl)-sn-glycerol + diphosphate. It functions in the pathway membrane lipid metabolism; glycerophospholipid metabolism. In terms of biological role, catalyzes the formation of CDP-2,3-bis-(O-geranylgeranyl)-sn-glycerol (CDP-archaeol) from 2,3-bis-(O-geranylgeranyl)-sn-glycerol 1-phosphate (DGGGP) and CTP. This reaction is the third ether-bond-formation step in the biosynthesis of archaeal membrane lipids. The sequence is that of CDP-archaeol synthase from Methanococcus maripaludis (strain C6 / ATCC BAA-1332).